The following is a 450-amino-acid chain: Tubulin beta-1 chain (450 aa).

Residues glutamine 11, glutamate 69, serine 138, glycine 142, threonine 143, glycine 144, asparagine 204, and asparagine 226 each coordinate GTP. A Mg(2+)-binding site is contributed by glutamate 69. Residues glutamine 426 to isoleucine 450 are disordered. A compositionally biased stretch (acidic residues) spans threonine 429 to glutamate 444.

It belongs to the tubulin family. Dimer of alpha and beta chains. A typical microtubule is a hollow water-filled tube with an outer diameter of 25 nm and an inner diameter of 15 nM. Alpha-beta heterodimers associate head-to-tail to form protofilaments running lengthwise along the microtubule wall with the beta-tubulin subunit facing the microtubule plus end conferring a structural polarity. Microtubules usually have 13 protofilaments but different protofilament numbers can be found in some organisms and specialized cells. Mg(2+) serves as cofactor.

The protein localises to the cytoplasm. The protein resides in the cytoskeleton. Its function is as follows. Tubulin is the major constituent of microtubules, a cylinder consisting of laterally associated linear protofilaments composed of alpha- and beta-tubulin heterodimers. Microtubules grow by the addition of GTP-tubulin dimers to the microtubule end, where a stabilizing cap forms. Below the cap, tubulin dimers are in GDP-bound state, owing to GTPase activity of alpha-tubulin. The protein is Tubulin beta-1 chain (TUBB1) of Pisum sativum (Garden pea).